A 139-amino-acid polypeptide reads, in one-letter code: Small ribosomal subunit protein uS9 (139 aa).

The protein belongs to the universal ribosomal protein uS9 family.

The sequence is that of Small ribosomal subunit protein uS9 from Coxiella burnetii (strain CbuK_Q154) (Coxiella burnetii (strain Q154)).